A 467-amino-acid polypeptide reads, in one-letter code: Fumarate hydratase class II (467 aa).

Residues 98 to 100 (SGT), R126, 129 to 132 (HPND), 139 to 141 (SSN), and T187 contribute to the substrate site. The Proton donor/acceptor role is filled by H188. The active site involves S318. Substrate contacts are provided by residues S319 and 324 to 326 (KVN).

The protein belongs to the class-II fumarase/aspartase family. Fumarase subfamily. In terms of assembly, homotetramer.

It localises to the cytoplasm. The catalysed reaction is (S)-malate = fumarate + H2O. The protein operates within carbohydrate metabolism; tricarboxylic acid cycle; (S)-malate from fumarate: step 1/1. Involved in the TCA cycle. Catalyzes the stereospecific interconversion of fumarate to L-malate. The polypeptide is Fumarate hydratase class II (Salmonella typhi).